A 235-amino-acid polypeptide reads, in one-letter code: Probable transcriptional regulatory protein JJD26997_0557 (235 aa).

Belongs to the TACO1 family.

Its subcellular location is the cytoplasm. This Campylobacter jejuni subsp. doylei (strain ATCC BAA-1458 / RM4099 / 269.97) protein is Probable transcriptional regulatory protein JJD26997_0557.